Here is a 30-residue protein sequence, read N- to C-terminus: NADH-ubiquinone oxidoreductase chain 5 (30 aa).

The helical transmembrane segment at Asn7 to Phe27 threads the bilayer.

Belongs to the complex I subunit 5 family.

The protein localises to the mitochondrion inner membrane. The enzyme catalyses a ubiquinone + NADH + 5 H(+)(in) = a ubiquinol + NAD(+) + 4 H(+)(out). Its function is as follows. Core subunit of the mitochondrial membrane respiratory chain NADH dehydrogenase (Complex I) that is believed to belong to the minimal assembly required for catalysis. Complex I functions in the transfer of electrons from NADH to the respiratory chain. The immediate electron acceptor for the enzyme is believed to be ubiquinone. The sequence is that of NADH-ubiquinone oxidoreductase chain 5 (ND5) from Pisaster ochraceus (Ochre sea star).